The chain runs to 513 residues: Na(+)/H(+) antiporter NhaB (513 aa).

The next 12 helical transmembrane spans lie at 23-43 (LALI…PFVA), 52-72 (IFTL…LLAI), 97-117 (LLLM…LFIF), 120-140 (LLLS…AAAF), 144-164 (FLDA…FYGI), 202-222 (LMMH…VGEP), 238-258 (FFLR…LTCL), 303-323 (AIIG…VGLI), 348-368 (TESL…AVII), 391-411 (LFYI…VGTI), 447-467 (ATPN…APLI), and 475-495 (VWMA…CVEF).

The protein belongs to the NhaB Na(+)/H(+) (TC 2.A.34) antiporter family.

It is found in the cell inner membrane. It catalyses the reaction 2 Na(+)(in) + 3 H(+)(out) = 2 Na(+)(out) + 3 H(+)(in). Na(+)/H(+) antiporter that extrudes sodium in exchange for external protons. This Escherichia coli O127:H6 (strain E2348/69 / EPEC) protein is Na(+)/H(+) antiporter NhaB.